The sequence spans 347 residues: 4-hydroxy-2-oxovalerate aldolase (347 aa).

A Pyruvate carboxyltransferase domain is found at 2–252; it reads ILISDATLRD…DTRTTFERVM (251 aa). Residue 10–11 participates in substrate binding; sequence RD. Residue D11 participates in Mn(2+) binding. H14 serves as the catalytic Proton acceptor. The substrate site is built by S164 and H191. The Mn(2+) site is built by H191 and H193.

This sequence belongs to the 4-hydroxy-2-oxovalerate aldolase family.

It catalyses the reaction (S)-4-hydroxy-2-oxopentanoate = acetaldehyde + pyruvate. This chain is 4-hydroxy-2-oxovalerate aldolase, found in Burkholderia pseudomallei (strain 1106a).